The primary structure comprises 212 residues: Probable GTP-binding protein EngB (212 aa).

Residues 25-199 (FGYEVAFAGR…WAKLDEWMEY (175 aa)) enclose the EngB-type G domain. GTP is bound by residues 33–40 (GRSNAGKS), 60–64 (GRTQL), 78–81 (DLPG), 145–148 (TKSD), and 178–180 (FSS). Mg(2+)-binding residues include Ser40 and Thr62.

The protein belongs to the TRAFAC class TrmE-Era-EngA-EngB-Septin-like GTPase superfamily. EngB GTPase family. It depends on Mg(2+) as a cofactor.

Necessary for normal cell division and for the maintenance of normal septation. This is Probable GTP-binding protein EngB from Hydrogenovibrio crunogenus (strain DSM 25203 / XCL-2) (Thiomicrospira crunogena).